The following is a 349-amino-acid chain: NADH-quinone oxidoreductase subunit H (349 aa).

8 consecutive transmembrane segments (helical) span residues 16–36 (WPVV…MGCV), 88–108 (GLFI…WAVV), 123–143 (LLFL…AGWA), 157–177 (AAQM…VLLI), 202–222 (FLSW…ISGI), 264–284 (ILVS…PVGF), 285–305 (LPDG…IFLW), and 325–345 (VFIP…MSPL).

It belongs to the complex I subunit 1 family. As to quaternary structure, NDH-1 is composed of 14 different subunits. Subunits NuoA, H, J, K, L, M, N constitute the membrane sector of the complex.

It is found in the cell inner membrane. It carries out the reaction a quinone + NADH + 5 H(+)(in) = a quinol + NAD(+) + 4 H(+)(out). Its function is as follows. NDH-1 shuttles electrons from NADH, via FMN and iron-sulfur (Fe-S) centers, to quinones in the respiratory chain. The immediate electron acceptor for the enzyme in this species is believed to be ubiquinone. Couples the redox reaction to proton translocation (for every two electrons transferred, four hydrogen ions are translocated across the cytoplasmic membrane), and thus conserves the redox energy in a proton gradient. This subunit may bind ubiquinone. The sequence is that of NADH-quinone oxidoreductase subunit H from Azoarcus sp. (strain BH72).